Consider the following 313-residue polypeptide: Protease HtpX homolog (313 aa).

The next 2 helical transmembrane spans lie at 7–24 (AMLL…GYLI) and 29–46 (GMMI…FSYW). Zn(2+) is bound at residue histidine 130. Glutamate 131 is a catalytic residue. Histidine 134 lines the Zn(2+) pocket. The next 2 membrane-spanning stretches (helical) occupy residues 145–165 (ITAT…FFGG) and 172–192 (PFGF…AMVV). Glutamate 201 contacts Zn(2+). The tract at residues 282-313 (GNAPPASLREDEPGADGPWGRSASRARKGPWS) is disordered.

The protein belongs to the peptidase M48B family. It depends on Zn(2+) as a cofactor.

The protein resides in the cell inner membrane. The chain is Protease HtpX homolog from Chelativorans sp. (strain BNC1).